An 806-amino-acid polypeptide reads, in one-letter code: Ribonucleoside-diphosphate reductase large subunit (806 aa).

Residues 1 to 91 (MYVLNRKGEE…TDNLHKNTSD (91 aa)) form the ATP-cone domain. Residues 5-6 (NR), 11-17 (EDISFDQ), Thr52, and Asp56 contribute to the ATP site. Position 215 (Ser215) interacts with GDP. Residues Cys216 and Cys442 are joined by a disulfide bond. DTTP-binding positions include 224–226 (DSI), Lys241, Arg254, and 261–262 (RG). GDP is bound at residue Asn425. Catalysis depends on Asn425, which acts as the Proton acceptor. The active-site Cysteine radical intermediate is the Cys427. GDP-binding positions include Glu429 and 604-607 (TAST). Glu429 (proton acceptor) is an active-site residue.

This sequence belongs to the ribonucleoside diphosphate reductase large chain family. Heterodimer of a large and a small subunit.

It catalyses the reaction a 2'-deoxyribonucleoside 5'-diphosphate + [thioredoxin]-disulfide + H2O = a ribonucleoside 5'-diphosphate + [thioredoxin]-dithiol. With respect to regulation, under complex allosteric control mediated by deoxynucleoside triphosphates and ATP binding to separate specificity and activation sites on the large subunit. The type of nucleotide bound at the specificity site determines substrate preference. It seems probable that ATP makes the enzyme reduce CDP and UDP, dGTP favors ADP reduction and dTTP favors GDP reduction. Stimulated by ATP and inhibited by dATP binding to the activity site. Functionally, provides the precursors necessary for DNA synthesis. Catalyzes the biosynthesis of deoxyribonucleotides from the corresponding ribonucleotides. This Plasmodium falciparum (isolate Dd2) protein is Ribonucleoside-diphosphate reductase large subunit (RNR1).